A 213-amino-acid chain; its full sequence is Cytochrome c biogenesis ATP-binding export protein CcmA (213 aa).

The 207-residue stretch at 7-213 (LKTKKLACQR…VRLENYKFTE (207 aa)) folds into the ABC transporter domain. ATP is bound at residue 39–46 (GHNGIGKT).

It belongs to the ABC transporter superfamily. CcmA exporter (TC 3.A.1.107) family. In terms of assembly, the complex is composed of two ATP-binding proteins (CcmA) and two transmembrane proteins (CcmB).

The protein localises to the cell inner membrane. The catalysed reaction is heme b(in) + ATP + H2O = heme b(out) + ADP + phosphate + H(+). Part of the ABC transporter complex CcmAB involved in the biogenesis of c-type cytochromes; once thought to export heme, this seems not to be the case, but its exact role is uncertain. Responsible for energy coupling to the transport system. The polypeptide is Cytochrome c biogenesis ATP-binding export protein CcmA (Pasteurella multocida (strain Pm70)).